Here is a 417-residue protein sequence, read N- to C-terminus: D-galactonate dehydratase family member RspA (417 aa).

2 residues coordinate substrate: Gln-43 and His-127. The Proton donor/acceptor role is filled by Tyr-158. Asp-223 is a Mg(2+) binding site. The Proton donor/acceptor role is filled by His-225. Glu-249 and Glu-275 together coordinate Mg(2+). Substrate is bound by residues Glu-275, Arg-296, His-325, Asp-329, and Glu-352.

Belongs to the mandelate racemase/muconate lactonizing enzyme family. GalD subfamily. It depends on Mg(2+) as a cofactor.

It carries out the reaction D-gluconate = 2-dehydro-3-deoxy-D-gluconate + H2O. Functionally, has low D-gluconate dehydratase activity (in vitro), suggesting that it has no significant role in D-gluconate degradation in vivo. Has no detectable activity with a panel of 70 other acid sugars (in vitro). The sequence is that of D-galactonate dehydratase family member RspA (rspA) from Pantoea ananatis (strain LMG 20103).